The chain runs to 578 residues: E3 ubiquitin-protein ligase Praja-1 (578 aa).

A disordered region spans residues 1 to 298; the sequence is MSHQERIASQ…KVPRRRRTMA (298 aa). Basic and acidic residues-rich tracts occupy residues 57–67 and 107–116; these read DYSRYPPREYR and KFKDDPEKGA. Residues 151–163 show a composition bias toward polar residues; sequence SKQNGSSASQISS. Position 231 is a phosphothreonine (Thr231). Basic and acidic residues-rich tracts occupy residues 243-264 and 273-290; these read RWRD…RGRG and RYAE…ADKV. Residues Ser317 and Ser319 each carry the phosphoserine modification. Residues 332–397 are disordered; it reads RSREQPQSSS…QASLEEGEIP (66 aa). Positions 359-373 are enriched in low complexity; that stretch reads AGAGSLASAGSNGSG. Acidic residues predominate over residues 377 to 395; sequence EVQDPSLQEEEQASLEEGE. The RING-type zinc finger occupies 530 to 571; sequence CPICCSEYVKGEVATELPCHHYFHKPCVSIWLQKSGTCPVCR.

Binds ubiquitin-conjugating enzymes (E2s). Binds, in vitro and in vivo, the MAGE conserved domain of MAGED1. Binds weakly Necdin, in vitro. Interacts with UBE2D2. In terms of processing, substrate for E2-dependent ubiquitination. In terms of tissue distribution, expressed in brain, liver, kidney. Highest levels in brain where it is found in many regions including cortical and subcortical areas and in neurons of the amygdala. Weak expression also found in testis. Also expressed in developing embryo.

The catalysed reaction is S-ubiquitinyl-[E2 ubiquitin-conjugating enzyme]-L-cysteine + [acceptor protein]-L-lysine = [E2 ubiquitin-conjugating enzyme]-L-cysteine + N(6)-ubiquitinyl-[acceptor protein]-L-lysine.. Has E2-dependent E3 ubiquitin-protein ligase activity. Ubiquitinates MAGED1 antigen leading to its subsequent degradation by proteasome. May be involved in protein sorting. This chain is E3 ubiquitin-protein ligase Praja-1 (Pja1), found in Mus musculus (Mouse).